The sequence spans 116 residues: Prefoldin subunit beta (116 aa).

Belongs to the prefoldin subunit beta family. As to quaternary structure, heterohexamer of two alpha and four beta subunits.

The protein localises to the cytoplasm. Functionally, molecular chaperone capable of stabilizing a range of proteins. Seems to fulfill an ATP-independent, HSP70-like function in archaeal de novo protein folding. The polypeptide is Prefoldin subunit beta (Thermococcus onnurineus (strain NA1)).